The chain runs to 557 residues: Dihydroxy-acid dehydratase (557 aa).

Position 50 (Cys50) interacts with [2Fe-2S] cluster. Residue Asp82 coordinates Mg(2+). Cys123 contacts [2Fe-2S] cluster. Asp124 and Lys125 together coordinate Mg(2+). The residue at position 125 (Lys125) is an N6-carboxylysine. Cys195 provides a ligand contact to [2Fe-2S] cluster. Glu447 is a binding site for Mg(2+). The active-site Proton acceptor is Ser473.

The protein belongs to the IlvD/Edd family. Homodimer. The cofactor is [2Fe-2S] cluster. Mg(2+) is required as a cofactor.

The catalysed reaction is (2R)-2,3-dihydroxy-3-methylbutanoate = 3-methyl-2-oxobutanoate + H2O. It carries out the reaction (2R,3R)-2,3-dihydroxy-3-methylpentanoate = (S)-3-methyl-2-oxopentanoate + H2O. The protein operates within amino-acid biosynthesis; L-isoleucine biosynthesis; L-isoleucine from 2-oxobutanoate: step 3/4. It participates in amino-acid biosynthesis; L-valine biosynthesis; L-valine from pyruvate: step 3/4. In terms of biological role, functions in the biosynthesis of branched-chain amino acids. Catalyzes the dehydration of (2R,3R)-2,3-dihydroxy-3-methylpentanoate (2,3-dihydroxy-3-methylvalerate) into 2-oxo-3-methylpentanoate (2-oxo-3-methylvalerate) and of (2R)-2,3-dihydroxy-3-methylbutanoate (2,3-dihydroxyisovalerate) into 2-oxo-3-methylbutanoate (2-oxoisovalerate), the penultimate precursor to L-isoleucine and L-valine, respectively. This Nitrosomonas europaea (strain ATCC 19718 / CIP 103999 / KCTC 2705 / NBRC 14298) protein is Dihydroxy-acid dehydratase.